The primary structure comprises 1100 residues: Sorbin and SH3 domain-containing protein 2 (1100 aa).

Tyrosine 13, serine 14, histidine 27, glycine 28, serine 30, and serine 43 each carry phosphoserine. Over residues serine 30–isoleucine 52 the composition is skewed to polar residues. Residues serine 30–serine 57 form a disordered region. Positions valine 66–glycine 127 constitute a SoHo domain. Over residues serine 134–arginine 147 the composition is skewed to polar residues. Residues serine 134–aspartate 311 are disordered. At histidine 153 the chain carries Alanine amide. A phosphoserine mark is found at serine 154 and serine 157. Positions proline 167–leucine 180 are enriched in pro residues. Basic and acidic residues predominate over residues arginine 181–proline 217. Phosphothreonine occurs at positions 234 and 236. Residues serine 239, serine 245, serine 248, lysine 258, serine 259, and glutamate 260 each carry the phosphoserine modification. A phosphothreonine mark is found at threonine 277, glycine 280, and valine 282. A Phosphoserine modification is found at serine 287. Positions serine 287 to serine 304 are enriched in low complexity. A Phosphothreonine modification is found at threonine 292. 10 positions are modified to phosphoserine: phenylalanine 295, serine 297, serine 298, serine 299, serine 301, serine 302, serine 304, alanine 306, aspartate 311, and proline 316. 3 positions are modified to phosphothreonine: serine 320, serine 322, and glycine 326. Phosphoserine occurs at positions 341, 344, and 346. Glutamate 366 carries the post-translational modification Phosphothreonine. Serine 381 and serine 383 each carry phosphoserine. Phosphothreonine occurs at positions 413 and 415. 2 positions are modified to phosphoserine: arginine 437 and arginine 439. Isoleucine 459 is subject to Phosphothreonine. 5 positions are modified to phosphoserine: lysine 474, serine 494, serine 497, serine 550, and serine 750. A disordered region spans residues arginine 807–leucine 866. Residues alanine 812 to cysteine 824 show a composition bias toward polar residues. The segment covering histidine 825–proline 839 has biased composition (basic and acidic residues). Phosphoserine is present on serine 843. The span at alanine 853–leucine 866 shows a compositional bias: basic and acidic residues. SH3 domains follow at residues lysine 863–proline 922 and glycine 938–lysine 999. Phosphoserine occurs at positions 1017 and 1023. In terms of domain architecture, SH3 3 spans glycine 1041–leucine 1100.

Interacts with ABL, CBL, DNM1, DNM2, FLOT1, AFDN, PTK2B/PYK2, SAPAP, SPTAN1, SYNJ1, SYNJ2, VCL/vinculin and WASF. Interacts with ABL1/c-Abl, ABL2/v-Abl/Arg, ACTN, CBL and PALLD. Interacts with PTPN12 and WASF1 via its SH3 domains; this interaction may mediate the partial PTPN12 and WASF1 translocation to focal adhesion sites. Ubiquitinated by CBL. Post-translationally, dephosphorylated by PTPN12. As to expression, abundantly expressed in heart. In cardiac muscle cells, located in the Z-disks of sarcomere. Also found, but to a lower extent, in small and large intestine, pancreas, thymus, colon, spleen, prostate, testis, brain, ovary and epithelial cells. In the pancreas, mainly expressed in acinar cells, duct cells and all cell types in islets (at protein level). Tends to be down-regulated in pancreatic adenocarcinomas ans metastases.

The protein resides in the cytoplasm. It localises to the perinuclear region. It is found in the apical cell membrane. Its subcellular location is the cell junction. The protein localises to the focal adhesion. The protein resides in the cell projection. It localises to the lamellipodium. Adapter protein that plays a role in the assembling of signaling complexes, being a link between ABL kinases and actin cytoskeleton. Can form complex with ABL1 and CBL, thus promoting ubiquitination and degradation of ABL1. May play a role in the regulation of pancreatic cell adhesion, possibly by acting on WASF1 phosphorylation, enhancing phosphorylation by ABL1, as well as dephosphorylation by PTPN12. Isoform 6 increases water and sodium absorption in the intestine and gall-bladder. This is Sorbin and SH3 domain-containing protein 2 (SORBS2) from Homo sapiens (Human).